Here is a 550-residue protein sequence, read N- to C-terminus: uncharacterized protein (550 aa).

A signal peptide spans 1 to 53; sequence MVVIANKGALWAYYCKRLLNSVTYMMYPLIRKRTMKKLLLIVGLLLACSTVMR. Asn-296 and Asn-518 each carry an N-linked (GlcNAc...) asparagine glycan.

The protein localises to the endoplasmic reticulum. This is an uncharacterized protein from Schizosaccharomyces pombe (strain 972 / ATCC 24843) (Fission yeast).